A 128-amino-acid polypeptide reads, in one-letter code: Large ribosomal subunit protein bL17 (128 aa).

It belongs to the bacterial ribosomal protein bL17 family. As to quaternary structure, part of the 50S ribosomal subunit. Contacts protein L32.

This chain is Large ribosomal subunit protein bL17, found in Streptococcus uberis (strain ATCC BAA-854 / 0140J).